A 473-amino-acid chain; its full sequence is Glutamate--tRNA ligase 2 (473 aa).

A 'HIGH' region motif is present at residues 11–21; sequence PSPTGYLHIGG. The span at 113–133 shows a compositional bias: basic and acidic residues; it reads KARAEGRPPRYDGRWRDRDPS. Residues 113 to 136 are disordered; sequence KARAEGRPPRYDGRWRDRDPSEAP. The 'KMSKS' region motif lies at 240–244; the sequence is KLSKR. Residue lysine 243 participates in ATP binding.

The protein belongs to the class-I aminoacyl-tRNA synthetase family. Glutamate--tRNA ligase type 1 subfamily. In terms of assembly, monomer.

The protein localises to the cytoplasm. It catalyses the reaction tRNA(Glu) + L-glutamate + ATP = L-glutamyl-tRNA(Glu) + AMP + diphosphate. Its function is as follows. Catalyzes the attachment of glutamate to tRNA(Glu) in a two-step reaction: glutamate is first activated by ATP to form Glu-AMP and then transferred to the acceptor end of tRNA(Glu). In Brucella canis (strain ATCC 23365 / NCTC 10854 / RM-666), this protein is Glutamate--tRNA ligase 2.